We begin with the raw amino-acid sequence, 690 residues long: MAASTAAGKQRIPKVAKVKNKAPAEVQITAEQLLREAKERELELLPPPPQQKITDEEELNDYKLRKRKTFEDNIRKNRTVISNWIKYAQWEESLKEIQRARSIYERALDVDYRNITLWLKYAEMEMKNRQVNHARNIWDRAITTLPRVNQFWYKYTYMEEMLGNVAGARQVFERWMEWQPEEQAWHSYINFELRYKEVERARTIYERFVLVHPAVKNWIKYARFEEKHAYFAHARKVYERAVEFFGDEHMDEHLYVAFAKFEENQKEFERVRVIYKYALDRISKQEAQELFKNYTIFEKKFGDRRGIEDIIVSKRRFQYEEEVKANPHNYDAWFDYLRLVESDAEADTVREVYERAIANVPPIQEKRHWKRYIYLWVNYALYEELEAKDPERTRQVYQASLELIPHKKFTFAKMWLYYAQFEIRQKNLPFARRALGTSIGKCPKNKLFKGYIELELQLREFDRCRKLYEKFLEFGPENCTSWIKFAELETILGDIERARAIYELAISQPRLDMPEVLWKSYIDFEIEQEETERTRNLYRQLLQRTQHVKVWISFAQFELSSGKEGSVAKCRQIYEEANKTMRNCEEKEERLMLLESWRSFEDEFGTVSDKERVDKLMPEKVKKRRKVQADDGSDAGWEEYYDYIFPEDAANQPNLKLLAMAKLWKKQQQEREAAEQDPDKDIDESESSSF.

HAT repeat units lie at residues 61–93 (DYKL…WEES), 95–127 (KEIQ…MEMK), 129–161 (RQVN…MEEM), 163–194 (GNVA…FELR), 196–227 (KEVE…FEEK), 229–264 (AYFA…FEEN), 266–300 (KEFE…FEKK), 310–342 (IIVS…LVES), 344–378 (AEAD…LWVN), 388–424 (KDPE…FEIR), 459–491 (REFD…LETI), 493–527 (GDIE…FEIE), 529–560 (EETE…FELS), 565–606 (GSVA…EFGT), 608–646 (SDKE…YIFP), and 648–673 (DAAN…EREA). A mediates interaction with HSP90 region spans residues 250-467 (MDEHLYVAFA…LREFDRCRKL (218 aa)). Phosphoserine is present on serine 342. The Nuclear localization signal signature appears at 618 to 626 (PEKVKKRRK). The span at 667–679 (QQQEREAAEQDPD) shows a compositional bias: basic and acidic residues. The disordered stretch occupies residues 667–690 (QQQEREAAEQDPDKDIDESESSSF). Residues 680–690 (KDIDESESSSF) are compositionally biased toward acidic residues. A Phosphoserine modification is found at serine 689.

This sequence belongs to the crooked-neck family. In terms of assembly, identified in the spliceosome C complex. Present in a spliceosome complex assembled in vitro containing CRNKL1, HPRP8BP and SNRPB2. Component of the minor spliceosome, which splices U12-type introns. Interacts with PPIL2 (via the PPIase cyclophilin-type domain); they may form a trimeric complex with HSP90.

It is found in the nucleus. Its subcellular location is the nucleus speckle. Its function is as follows. Involved in pre-mRNA splicing process. As a component of the minor spliceosome, involved in the splicing of U12-type introns in pre-mRNAs. This Mus musculus (Mouse) protein is Crooked neck-like protein 1 (Crnkl1).